Consider the following 168-residue polypeptide: Small ribosomal subunit protein bS6 (168 aa).

Positions 103–168 (RQAIAEEKEK…AAADKSDDNA (66 aa)) are disordered. Basic and acidic residues predominate over residues 106–115 (IAEEKEKKAE). The span at 116 to 125 (GQAAADAAPA) shows a compositional bias: low complexity.

It belongs to the bacterial ribosomal protein bS6 family.

Binds together with bS18 to 16S ribosomal RNA. This Desulfosudis oleivorans (strain DSM 6200 / JCM 39069 / Hxd3) (Desulfococcus oleovorans) protein is Small ribosomal subunit protein bS6.